The sequence spans 154 residues: Large ribosomal subunit protein uL15 (154 aa).

A disordered region spans residues 1–61 (MDLSTLKPVA…GGQMPLMRRM (61 aa)).

It belongs to the universal ribosomal protein uL15 family. In terms of assembly, part of the 50S ribosomal subunit.

Binds to the 23S rRNA. The chain is Large ribosomal subunit protein uL15 from Oenococcus oeni (strain ATCC BAA-331 / PSU-1).